The following is a 480-amino-acid chain: Glutamate--tRNA ligase (480 aa).

The short motif at 21-31 (PSPTGYLHVGG) is the 'HIGH' region element. Zn(2+) is bound by residues Cys110, Cys112, Cys137, and His139. Positions 248–252 (KLSKR) match the 'KMSKS' region motif. Residue Lys251 participates in ATP binding.

This sequence belongs to the class-I aminoacyl-tRNA synthetase family. Glutamate--tRNA ligase type 1 subfamily. As to quaternary structure, monomer. The cofactor is Zn(2+).

It is found in the cytoplasm. It catalyses the reaction tRNA(Glu) + L-glutamate + ATP = L-glutamyl-tRNA(Glu) + AMP + diphosphate. In terms of biological role, catalyzes the attachment of glutamate to tRNA(Glu) in a two-step reaction: glutamate is first activated by ATP to form Glu-AMP and then transferred to the acceptor end of tRNA(Glu). The sequence is that of Glutamate--tRNA ligase from Haemophilus influenzae (strain ATCC 51907 / DSM 11121 / KW20 / Rd).